The sequence spans 450 residues: Putative zinc metalloprotease PA3649 (450 aa).

Residue His21 coordinates Zn(2+). Glu22 is an active-site residue. His25 is a binding site for Zn(2+). Residues 97–119 (IAIVAAGPIANFLLAILFFWVVA) traverse the membrane as a helical segment. The PDZ domain occupies 199–291 (GWLKGEDNPD…VLDVALELAV (93 aa)). Residues 425–444 (AWGMQIGISLVVGVMLLALV) traverse the membrane as a helical segment.

It belongs to the peptidase M50B family. Zn(2+) is required as a cofactor.

Its subcellular location is the cell inner membrane. The chain is Putative zinc metalloprotease PA3649 from Pseudomonas aeruginosa (strain ATCC 15692 / DSM 22644 / CIP 104116 / JCM 14847 / LMG 12228 / 1C / PRS 101 / PAO1).